Reading from the N-terminus, the 78-residue chain is Defensin beta 136 (78 aa).

The signal sequence occupies residues 1 to 21 (MNLCLSSLLFFLVILLPSGKG). 3 cysteine pairs are disulfide-bonded: Cys33–Cys60, Cys40–Cys54, and Cys44–Cys61.

This sequence belongs to the beta-defensin family.

The protein resides in the secreted. Host defense peptide that exhibits antimicrobial and antifungal activity. Exhibits antimicrobial activity against E.coli, S.aureus and C.albicans (in vitro). Has high lipopolysaccharide (LPS)-binding affinity, and may thereby be involved in immunoregulation through LPS neutralization. This chain is Defensin beta 136 (DEFB136), found in Pan troglodytes (Chimpanzee).